Consider the following 1358-residue polypeptide: MGNQLAGIAPSQILSVESYFSDIHDFEYDKSLGSTRFFKVARAKHREGLVVVKVFAIQDPTLPLTSYKQELEELKIRLNSAQNCLPFQKASEKASEKAAMLFRQYVRDNLYDRISTRPFLNNIENRWIAFQILTAVDQAHKPGVRHGDIKTENVMVTSWNWVLLTDFASFKPTYLPEDNPADFNYFFDTSRRRTCYIAPERFVDGGMFATELEYMRDPSTPLVDLNSNQRTRGELKRAMDIFSAGCVIAELFTEGVPLFDLSQLLAYRNGHFFPEQVLNKIEDHSIRELVTQMIHREPDKRLEAEDYLKQQRGNAFPEIFYTFLQPYMAQFAKETFLSADERILVIRKDLGNIIHNLCGHDLPEKTEEEPKENGLVILVSVITSCLQTLKYYDSKLAALELILHLAPRLGVEILLDRITPYLLHFSNDSVPRVRAEALRTLTKVLALVKEVPRNDINIYPEYILPGIAHLAQDDATIVRLAYAENIALLAETALRFLELVQLKNLNMENDPNNEEIDEVTHPNGNYDTELQALHEMVQQKVVTLLSDPENIVKQTLMENGITRLCVFFGRQKANDVLLSHMITFLNDKNDWHLRGAFFDSIVGVAAYVGWQSSSILKPLLQQGLSDAEEFVIVKALYALTCMCQLGLLQKPHVYEFASDIAPFLCHPNLWIRYGAVGFVTVVARQISTADVYCKLMPYLDPYITQPIIQIERKLVLLSVLKEPVSRSIFDYALRSKDITSLFRHLHMRQKKRNGSLPDCPPPEDPAIAQLLKKLLSQGMTEDEEDKLLALKDFMMKSNKAKANIVDQSHLHDSSQKGVIDLAALGITGRQVDLVKTKQEPDDKRARKHVKQDSNVNEEWKSMFGSLDPPNMPQALPKGSDQEVIQTGKPPRSESSAGICVPLSTSPQVPEVTTIQNKKPVIPVLSSTILPSTYQIRITTCKTELQQLIQQKREQCNAERIAKQMMENAEWESKPPPPGWRPKGLLVAHLHEHKSAVNRIRVSDEHSLFATCSNDGTVKIRNSQKMEGKTTTTRSILTYSRVGGRVKTLTFCQGSHYLAIASDNGAVQLLGIEASKLPKSPKIHPLQSRILDQKEDGCVVDMHHFNSGAQSVLAYATVNGSLVGWDLRSSSNAWTLKHDLKSGLITSFAVDIHQCWLCIGTSSGTMACWDMRFQLPISSHCHPSRARIRRLSMHPLYQSWVIAAVQGNNEVSMWDMETGDRRFTLWASSAPPLSELQPSPHSVHGIYCSPADGNPILLTAGSDMKIRFWDLAYPERSYVVAGSTSSPSVSYYRKIIEGTEVVQEIQNKQKVGPSDDTPRRGPESLPVGHHDIITDVATFQTTQGFIVTASRDGIVKVWK.

Gly-2 is lipidated: N-myristoyl glycine. Residues 26-324 (FEYDKSLGST…AFPEIFYTFL (299 aa)) form the Protein kinase domain. ATP contacts are provided by residues 32–40 (LGSTRFFKV) and Lys-53. Asp-148 functions as the Proton acceptor in the catalytic mechanism. 7 HEAT repeats span residues 373–411 (NGLV…RLGV), 413–450 (ILLD…LVKE), 458–495 (IYPE…TALR), 531–570 (QALH…FFGR), 572–610 (KAND…YVGW), 612–648 (SSSI…LGLL), and 690–726 (DVYC…PVSR). 4 positions are modified to phosphoserine: Ser-808, Ser-813, Ser-853, and Ser-865. The interval 875–899 (LPKGSDQEVIQTGKPPRSESSAGIC) is disordered. 6 WD repeats span residues 991–1030 (EHKS…GKTT), 1040–1079 (RVGG…LPKS), 1093–1134 (KEDG…NAWT), 1139–1178 (LKSG…PISS), 1182–1223 (PSRA…RRFT), and 1237–1278 (PSPH…RSYV). The disordered stretch occupies residues 1307–1326 (KQKVGPSDDTPRRGPESLPV). Positions 1315–1326 (DTPRRGPESLPV) are enriched in basic and acidic residues. Residue Thr-1316 is modified to Phosphothreonine. The stretch at 1327-1358 (GHHDIITDVATFQTTQGFIVTASRDGIVKVWK) is one WD 7 repeat.

It belongs to the protein kinase superfamily. Ser/Thr protein kinase family. As to quaternary structure, component of the PI3K (PI3KC3/PI3K-III/class III phosphatidylinositol 3-kinase) complex the core of which is composed of the catalytic subunit PIK3C3, the regulatory subunit PIK3R4 and BECN1 associating with additional regulatory/auxiliary subunits to form alternative complex forms. Alternative complex forms containing a fourth regulatory subunit in a mutually exclusive manner are PI3K complex I (PI3KC3-C1) containing ATG14, and PI3K complex II (PI3KC3-C2) containing UVRAG. PI3KC3-C1 displays a V-shaped architecture with PIK3R4 serving as a bridge between PIK3C3 and the ATG14:BECN1 subcomplex. Both, PI3KC3-C1 and PI3KC3-C2, can associate with further regulatory subunits, such as RUBCN, SH3GLB1/Bif-1, AMBRA1 and NRBF2. PI3KC3-C1 probably associates with PIK3CB. Interacts with RAB7A in the presence of PIK3C3/VPS34. Interacts with NRBF2. Interacts with ARMC3. Mn(2+) is required as a cofactor. Post-translationally, myristoylated. Probably autophosphorylated.

Its subcellular location is the late endosome. It localises to the cytoplasmic vesicle. It is found in the autophagosome. The protein resides in the membrane. It catalyses the reaction L-seryl-[protein] + ATP = O-phospho-L-seryl-[protein] + ADP + H(+). The enzyme catalyses L-threonyl-[protein] + ATP = O-phospho-L-threonyl-[protein] + ADP + H(+). Its function is as follows. Regulatory subunit of the PI3K complex that mediates formation of phosphatidylinositol 3-phosphate; different complex forms are believed to play a role in multiple membrane trafficking pathways: PI3KC3-C1 is involved in initiation of autophagosomes and PI3KC3-C2 in maturation of autophagosomes and endocytosis. Involved in regulation of degradative endocytic trafficking and cytokinesis, probably in the context of PI3KC3-C2. Regulatory subunit of the PI3K complex. May regulate membrane trafficking late in the endocytic pathway. The sequence is that of Phosphoinositide 3-kinase regulatory subunit 4 (PIK3R4) from Pongo abelii (Sumatran orangutan).